Reading from the N-terminus, the 298-residue chain is Diphthine methyl ester synthase (298 aa).

S-adenosyl-L-methionine is bound by residues Leu-9, Asp-85, Gly-88, 113 to 114 (SV), Leu-164, Leu-222, and His-247.

This sequence belongs to the diphthine synthase family.

The protein localises to the cytoplasm. The enzyme catalyses 2-[(3S)-amino-3-carboxypropyl]-L-histidyl-[translation elongation factor 2] + 4 S-adenosyl-L-methionine = diphthine methyl ester-[translation elongation factor 2] + 4 S-adenosyl-L-homocysteine + 3 H(+). It participates in protein modification; peptidyl-diphthamide biosynthesis. Functionally, S-adenosyl-L-methionine-dependent methyltransferase that catalyzes four methylations of the modified target histidine residue in translation elongation factor 2 (EF-2), to form an intermediate called diphthine methyl ester. The four successive methylation reactions represent the second step of diphthamide biosynthesis. The protein is Diphthine methyl ester synthase (DPH5) of Kluyveromyces lactis (strain ATCC 8585 / CBS 2359 / DSM 70799 / NBRC 1267 / NRRL Y-1140 / WM37) (Yeast).